The primary structure comprises 74 residues: Serine rich endogenous peptide 23 (74 aa).

The N-terminal stretch at 1–25 (MNKVVVYVLALSILLFFGLPNTTLA) is a signal peptide. The SCOOP motif signature appears at 52-66 (KIAVGGSDSVRAHSK). Positions 58-60 (SDS) match the SxS motif essential for MIK2 binding motif.

The protein belongs to the serine rich endogenous peptide (SCOOP) phytocytokine family. In terms of assembly, interacts with MIK2 (via extracellular leucine-rich repeat domain); this interaction triggers the formation of complex between MIK2 and the BAK1/SERK3 and SERK4 coreceptors, and subsequent BAK1 activation by phosphorylation. Mostly expressed in roots, and, to a lower extent, in seedlings shoots.

The protein localises to the cell membrane. It is found in the secreted. It localises to the extracellular space. Its subcellular location is the apoplast. Functionally, brassicaceae-specific phytocytokine (plant endogenous peptide released into the apoplast) perceived by MIK2 in a BAK1/SERK3 and SERK4 coreceptors-dependent manner, that modulates various physiological and antimicrobial processes including growth prevention and reactive oxygen species (ROS) response regulation. Inhibits root growth. The polypeptide is Serine rich endogenous peptide 23 (Arabidopsis thaliana (Mouse-ear cress)).